Reading from the N-terminus, the 210-residue chain is Uracil phosphoribosyltransferase (210 aa).

Residues arginine 80, arginine 105, and 132–140 (DPMLATGGS) contribute to the 5-phospho-alpha-D-ribose 1-diphosphate site. Residues isoleucine 195 and 200-202 (GDA) contribute to the uracil site. Aspartate 201 lines the 5-phospho-alpha-D-ribose 1-diphosphate pocket.

This sequence belongs to the UPRTase family. Mg(2+) is required as a cofactor.

The enzyme catalyses UMP + diphosphate = 5-phospho-alpha-D-ribose 1-diphosphate + uracil. It participates in pyrimidine metabolism; UMP biosynthesis via salvage pathway; UMP from uracil: step 1/1. With respect to regulation, allosterically activated by GTP. Catalyzes the conversion of uracil and 5-phospho-alpha-D-ribose 1-diphosphate (PRPP) to UMP and diphosphate. This is Uracil phosphoribosyltransferase from Thermoanaerobacter pseudethanolicus (strain ATCC 33223 / 39E) (Clostridium thermohydrosulfuricum).